The sequence spans 246 residues: 1-(5-phosphoribosyl)-5-[(5-phosphoribosylamino)methylideneamino] imidazole-4-carboxamide isomerase (246 aa).

Catalysis depends on Asp-8, which acts as the Proton acceptor. Asp-131 functions as the Proton donor in the catalytic mechanism.

The protein belongs to the HisA/HisF family.

The protein localises to the cytoplasm. It catalyses the reaction 1-(5-phospho-beta-D-ribosyl)-5-[(5-phospho-beta-D-ribosylamino)methylideneamino]imidazole-4-carboxamide = 5-[(5-phospho-1-deoxy-D-ribulos-1-ylimino)methylamino]-1-(5-phospho-beta-D-ribosyl)imidazole-4-carboxamide. The protein operates within amino-acid biosynthesis; L-histidine biosynthesis; L-histidine from 5-phospho-alpha-D-ribose 1-diphosphate: step 4/9. This Delftia acidovorans (strain DSM 14801 / SPH-1) protein is 1-(5-phosphoribosyl)-5-[(5-phosphoribosylamino)methylideneamino] imidazole-4-carboxamide isomerase.